Consider the following 690-residue polypeptide: Methionine--tRNA ligase (690 aa).

The short motif at 20–30 (PYANGSIHLGH) is the 'HIGH' region element. Residues C151, C154, C164, and C167 each coordinate Zn(2+). A 'KMSKS' region motif is present at residues 337 to 341 (KMSKS). K340 serves as a coordination point for ATP. The tRNA-binding domain maps to 589–690 (DFAKVDLRIA…EGAQPGMRVM (102 aa)).

Belongs to the class-I aminoacyl-tRNA synthetase family. MetG type 1 subfamily. As to quaternary structure, homodimer. Zn(2+) serves as cofactor.

Its subcellular location is the cytoplasm. The enzyme catalyses tRNA(Met) + L-methionine + ATP = L-methionyl-tRNA(Met) + AMP + diphosphate. Is required not only for elongation of protein synthesis but also for the initiation of all mRNA translation through initiator tRNA(fMet) aminoacylation. The protein is Methionine--tRNA ligase of Vibrio vulnificus (strain CMCP6).